A 121-amino-acid polypeptide reads, in one-letter code: UPF0738 protein RBAM_011600 (121 aa).

Belongs to the UPF0738 family.

This chain is UPF0738 protein RBAM_011600, found in Bacillus velezensis (strain DSM 23117 / BGSC 10A6 / LMG 26770 / FZB42) (Bacillus amyloliquefaciens subsp. plantarum).